A 153-amino-acid chain; its full sequence is 3-hydroxyacyl-[acyl-carrier-protein] dehydratase FabZ (153 aa).

Residue His53 is part of the active site.

It belongs to the thioester dehydratase family. FabZ subfamily.

Its subcellular location is the cytoplasm. It carries out the reaction a (3R)-hydroxyacyl-[ACP] = a (2E)-enoyl-[ACP] + H2O. In terms of biological role, involved in unsaturated fatty acids biosynthesis. Catalyzes the dehydration of short chain beta-hydroxyacyl-ACPs and long chain saturated and unsaturated beta-hydroxyacyl-ACPs. The polypeptide is 3-hydroxyacyl-[acyl-carrier-protein] dehydratase FabZ (Lawsonia intracellularis (strain PHE/MN1-00)).